The following is a 545-amino-acid chain: Chaperonin GroEL 1 (545 aa).

Residues 29–32 (TLGP), 86–90 (DGTTT), Gly-413, 477–479 (NAA), and Asp-493 contribute to the ATP site.

This sequence belongs to the chaperonin (HSP60) family. Forms a cylinder of 14 subunits composed of two heptameric rings stacked back-to-back. Interacts with the co-chaperonin GroES.

The protein localises to the cytoplasm. The catalysed reaction is ATP + H2O + a folded polypeptide = ADP + phosphate + an unfolded polypeptide.. In terms of biological role, together with its co-chaperonin GroES, plays an essential role in assisting protein folding. The GroEL-GroES system forms a nano-cage that allows encapsulation of the non-native substrate proteins and provides a physical environment optimized to promote and accelerate protein folding. The polypeptide is Chaperonin GroEL 1 (Arthrobacter sp. (strain FB24)).